A 318-amino-acid polypeptide reads, in one-letter code: UDP-N-acetylenolpyruvoylglucosamine reductase (318 aa).

Residues 38–204 form the FAD-binding PCMH-type domain; the sequence is IGGVCPVIVE…LGIEILLKEG (167 aa). Residue R182 is part of the active site. Residues 212-229 show a composition bias toward basic and acidic residues; sequence SLKDKRDRRNSSQPENKK. Residues 212 to 232 form a disordered region; sequence SLKDKRDRRNSSQPENKKSAG. S233 acts as the Proton donor in catalysis. Residue E310 is part of the active site.

It belongs to the MurB family. It depends on FAD as a cofactor.

It is found in the cytoplasm. The catalysed reaction is UDP-N-acetyl-alpha-D-muramate + NADP(+) = UDP-N-acetyl-3-O-(1-carboxyvinyl)-alpha-D-glucosamine + NADPH + H(+). Its pathway is cell wall biogenesis; peptidoglycan biosynthesis. Its function is as follows. Cell wall formation. The protein is UDP-N-acetylenolpyruvoylglucosamine reductase of Leptospira interrogans serogroup Icterohaemorrhagiae serovar Lai (strain 56601).